A 450-amino-acid polypeptide reads, in one-letter code: Tubulin alpha chain (450 aa).

Residue Gln-11 coordinates GTP. An N6-acetyllysine modification is found at Lys-40. Residues Glu-71, Gly-144, Thr-145, Thr-179, Asn-206, and Asn-228 each contribute to the GTP site. A Mg(2+)-binding site is contributed by Glu-71. Glu-254 is an active-site residue.

Belongs to the tubulin family. In terms of assembly, dimer of alpha and beta chains. A typical microtubule is a hollow water-filled tube with an outer diameter of 25 nm and an inner diameter of 15 nM. Alpha-beta heterodimers associate head-to-tail to form protofilaments running lengthwise along the microtubule wall with the beta-tubulin subunit facing the microtubule plus end conferring a structural polarity. Microtubules usually have 13 protofilaments but different protofilament numbers can be found in some organisms and specialized cells. It depends on Mg(2+) as a cofactor. Undergoes a tyrosination/detyrosination cycle, the cyclic removal and re-addition of a C-terminal tyrosine residue by the enzymes tubulin tyrosine carboxypeptidase (TTCP) and tubulin tyrosine ligase (TTL), respectively. Post-translationally, acetylation of alpha chains at Lys-40 stabilizes microtubules and affects affinity and processivity of microtubule motors. This modification has a role in multiple cellular functions, ranging from cell motility, cell cycle progression or cell differentiation to intracellular trafficking and signaling.

It localises to the cytoplasm. Its subcellular location is the cytoskeleton. The enzyme catalyses GTP + H2O = GDP + phosphate + H(+). Functionally, tubulin is the major constituent of microtubules, a cylinder consisting of laterally associated linear protofilaments composed of alpha- and beta-tubulin heterodimers. Microtubules grow by the addition of GTP-tubulin dimers to the microtubule end, where a stabilizing cap forms. Below the cap, tubulin dimers are in GDP-bound state, owing to GTPase activity of alpha-tubulin. The sequence is that of Tubulin alpha chain (TUBA) from Prunus dulcis (Almond).